Here is a 537-residue protein sequence, read N- to C-terminus: 2-succinyl-5-enolpyruvyl-6-hydroxy-3-cyclohexene-1-carboxylate synthase (537 aa).

This sequence belongs to the TPP enzyme family. MenD subfamily. As to quaternary structure, homodimer. Mg(2+) is required as a cofactor. It depends on Mn(2+) as a cofactor. Thiamine diphosphate serves as cofactor.

It carries out the reaction isochorismate + 2-oxoglutarate + H(+) = 5-enolpyruvoyl-6-hydroxy-2-succinyl-cyclohex-3-ene-1-carboxylate + CO2. It functions in the pathway quinol/quinone metabolism; 1,4-dihydroxy-2-naphthoate biosynthesis; 1,4-dihydroxy-2-naphthoate from chorismate: step 2/7. The protein operates within quinol/quinone metabolism; menaquinone biosynthesis. Functionally, catalyzes the thiamine diphosphate-dependent decarboxylation of 2-oxoglutarate and the subsequent addition of the resulting succinic semialdehyde-thiamine pyrophosphate anion to isochorismate to yield 2-succinyl-5-enolpyruvyl-6-hydroxy-3-cyclohexene-1-carboxylate (SEPHCHC). The sequence is that of 2-succinyl-5-enolpyruvyl-6-hydroxy-3-cyclohexene-1-carboxylate synthase from Rhodococcus erythropolis (strain PR4 / NBRC 100887).